Reading from the N-terminus, the 702-residue chain is Ribosomal RNA large subunit methyltransferase K/L (702 aa).

One can recognise a THUMP domain in the interval 43–154; sequence LVYQSLMWSR…KETASIALDL (112 aa).

It belongs to the methyltransferase superfamily. RlmKL family.

Its subcellular location is the cytoplasm. The enzyme catalyses guanosine(2445) in 23S rRNA + S-adenosyl-L-methionine = N(2)-methylguanosine(2445) in 23S rRNA + S-adenosyl-L-homocysteine + H(+). It catalyses the reaction guanosine(2069) in 23S rRNA + S-adenosyl-L-methionine = N(2)-methylguanosine(2069) in 23S rRNA + S-adenosyl-L-homocysteine + H(+). Its function is as follows. Specifically methylates the guanine in position 2445 (m2G2445) and the guanine in position 2069 (m7G2069) of 23S rRNA. The chain is Ribosomal RNA large subunit methyltransferase K/L from Shigella flexneri serotype 5b (strain 8401).